A 260-amino-acid polypeptide reads, in one-letter code: Small ribosomal subunit protein uS2 (260 aa).

The protein belongs to the universal ribosomal protein uS2 family.

In Streptococcus gordonii (strain Challis / ATCC 35105 / BCRC 15272 / CH1 / DL1 / V288), this protein is Small ribosomal subunit protein uS2.